The chain runs to 381 residues: Succinyl-diaminopimelate desuccinylase (381 aa).

His-71 serves as a coordination point for Zn(2+). Residue Asp-73 is part of the active site. Asp-104 contacts Zn(2+). Glu-138 serves as the catalytic Proton acceptor. The Zn(2+) site is built by Glu-139, Glu-167, and His-353.

This sequence belongs to the peptidase M20A family. DapE subfamily. As to quaternary structure, homodimer. The cofactor is Zn(2+). It depends on Co(2+) as a cofactor.

The enzyme catalyses N-succinyl-(2S,6S)-2,6-diaminopimelate + H2O = (2S,6S)-2,6-diaminopimelate + succinate. It participates in amino-acid biosynthesis; L-lysine biosynthesis via DAP pathway; LL-2,6-diaminopimelate from (S)-tetrahydrodipicolinate (succinylase route): step 3/3. Functionally, catalyzes the hydrolysis of N-succinyl-L,L-diaminopimelic acid (SDAP), forming succinate and LL-2,6-diaminopimelate (DAP), an intermediate involved in the bacterial biosynthesis of lysine and meso-diaminopimelic acid, an essential component of bacterial cell walls. The polypeptide is Succinyl-diaminopimelate desuccinylase (Shewanella halifaxensis (strain HAW-EB4)).